The chain runs to 1396 residues: Melanoma inhibitory activity protein 2 (1396 aa).

The first 22 residues, 1–22 (MAEVSVQRILLLVVSLAKCLEG), serve as a signal peptide directing secretion. The Lumenal portion of the chain corresponds to 23 to 604 (TKLLAHLKKC…YGFMSSALSP (582 aa)). An SH3 domain is found at 39-101 (TLISRVLALR…PRDAVEIEEV (63 aa)). A glycan (N-linked (GlcNAc...) asparagine) is linked at Asn59. 2 disordered regions span residues 197 to 288 (EGAG…VPDE) and 331 to 361 (ESNPPLQDIPSSVPPDEEVPAPCREISTDKE). Residues 243–258 (SDTEPTQELALEEESD) are compositionally biased toward acidic residues. Asn366 is a glycosylation site (N-linked (GlcNAc...) asparagine). Disordered regions lie at residues 396-421 (DKGENEDGEVDNLKHPIGSDFDPEKE) and 525-557 (PMEEHEGVHFKPSSSKRNEDDSNSWADPEELSV). An intramembrane segment occupies 605–625 (IEILLESVVAALPEDMRADFN). The Lumenal segment spans residues 626 to 628 (PSG). Residues 629-649 (FSLELAVCVLSVGLLAVVLFL) traverse the membrane as a helical segment. Topologically, residues 650 to 1396 (WRGFRSIRSR…AADPPETQEA (747 aa)) are cytoplasmic. A mediates interaction with MIA3 region spans residues 651–1243 (RGFRSIRSRF…RSYNMPSLDK (593 aa)). 2 coiled-coil regions span residues 693–867 (YEGL…LVTS) and 914–1082 (AAKL…NRQK). A disordered region spans residues 1103 to 1396 (PNTAFGREHS…AADPPETQEA (294 aa)). Residues 1105–1396 (TAFGREHSPY…AADPPETQEA (292 aa)) form a proline-rich domain (PRD); probably mediates interaction with COPII coat subunits region. Residues 1135–1146 (LLEGPLRLSPLL) show a composition bias toward low complexity. Basic and acidic residues predominate over residues 1165–1179 (MNTERGESSYDRLSD). Polar residues predominate over residues 1252 to 1269 (MESSGNGTKDNLGNSNVP). Pro residues-rich tracts occupy residues 1331-1342 (RDFPGPPLPPFP) and 1351-1368 (GFPPYLPPRAGFFPPPPH).

The protein belongs to the MIA/OTOR family. As to quaternary structure, interacts with MIA3. Interacts with the COPII coat subunits SEC23A, SEC23B and maybe SEC24C. Interacts with PREB; recruits PREB to endoplasmic reticulum exit sites. Interacts with APOB. Isoform 1 is expressed in liver (at protein level). Isoform 2 is highly expressed in liver and weakly in testis.

It localises to the endoplasmic reticulum membrane. Functionally, plays a role in the transport of cargos that are too large to fit into COPII-coated vesicles and require specific mechanisms to be incorporated into membrane-bound carriers and exported from the endoplasmic reticulum. Plays a role in the secretion of lipoproteins, pre-chylomicrons and pre-VLDLs, by participating in their export from the endoplasmic reticulum. Thereby, may play a role in cholesterol and triglyceride homeostasis. Required for collagen VII (COL7A1) secretion by loading COL7A1 into transport carriers and recruiting PREB/SEC12 at the endoplasmic reticulum exit sites. The polypeptide is Melanoma inhibitory activity protein 2 (Mus musculus (Mouse)).